We begin with the raw amino-acid sequence, 428 residues long: Serine--tRNA ligase (428 aa).

231-233 contributes to the L-serine binding site; sequence TAE. ATP contacts are provided by residues 262–264 and Val278; that span reads RRE. Glu285 provides a ligand contact to L-serine. ATP is bound at residue 349 to 352; the sequence is EVSS. An L-serine-binding site is contributed by Ser384.

The protein belongs to the class-II aminoacyl-tRNA synthetase family. Type-1 seryl-tRNA synthetase subfamily. Homodimer. The tRNA molecule binds across the dimer.

It localises to the cytoplasm. It catalyses the reaction tRNA(Ser) + L-serine + ATP = L-seryl-tRNA(Ser) + AMP + diphosphate + H(+). The catalysed reaction is tRNA(Sec) + L-serine + ATP = L-seryl-tRNA(Sec) + AMP + diphosphate + H(+). The protein operates within aminoacyl-tRNA biosynthesis; selenocysteinyl-tRNA(Sec) biosynthesis; L-seryl-tRNA(Sec) from L-serine and tRNA(Sec): step 1/1. In terms of biological role, catalyzes the attachment of serine to tRNA(Ser). Is also able to aminoacylate tRNA(Sec) with serine, to form the misacylated tRNA L-seryl-tRNA(Sec), which will be further converted into selenocysteinyl-tRNA(Sec). The protein is Serine--tRNA ligase of Chlamydia muridarum (strain MoPn / Nigg).